A 1914-amino-acid chain; its full sequence is Autophagy-related protein 2 homolog A (1914 aa).

The Chorein N-terminal domain occupies 14–112 (ERVCRYLLQH…LTLQPRQGSG (99 aa)). Phosphoserine occurs at positions 764, 869, 875, and 877. The disordered stretch occupies residues 1222 to 1243 (DLHPPPRPPSPTEIAGQKLSES). Phosphoserine occurs at positions 1246, 1282, and 1290. The disordered stretch occupies residues 1299-1337 (GERSGAQAPLPPPGASSHTLGSKAKEHENEEEGDGDTLD). Residues 1327 to 1337 (NEEEGDGDTLD) are compositionally biased toward acidic residues. Positions 1337–1383 (DSDEFCILDAPGLGIAPRDGEPIVTQLHPGPIIVHDGHFSQPLGSTD) are WIPI-interacting. At S1381 the chain carries Phosphoserine. 3 disordered regions span residues 1427–1452 (LTGPRVSPSRSSGPNRPQNSWRTQGG), 1589–1634 (MVPG…SSSD), and 1803–1822 (RSLQDKRSSRKLRRGQQPAD). The span at 1429–1446 (GPRVSPSRSSGPNRPQNS) shows a compositional bias: low complexity.

It belongs to the ATG2 family. In terms of assembly, interacts with ATG9A (via C-terminus). Interacts with TMEM41B. Interacts with VMP1.

The protein localises to the preautophagosomal structure membrane. The protein resides in the lipid droplet. Its subcellular location is the endoplasmic reticulum membrane. The catalysed reaction is a 1,2-diacyl-sn-glycero-3-phospho-L-serine(in) = a 1,2-diacyl-sn-glycero-3-phospho-L-serine(out). The enzyme catalyses a 1,2-diacyl-sn-glycero-3-phosphoethanolamine(in) = a 1,2-diacyl-sn-glycero-3-phosphoethanolamine(out). Lipid transfer protein involved in autophagosome assembly. Tethers the edge of the isolation membrane (IM) to the endoplasmic reticulum (ER) and mediates direct lipid transfer from ER to IM for IM expansion. Binds to the ER exit site (ERES), which is the membrane source for autophagosome formation, and extracts phospholipids from the membrane source and transfers them to ATG9 (ATG9A or ATG9B) to the IM for membrane expansion. Lipid transfer activity is enhanced by WIPI1 and WDR45/WIPI4, which promote ATG2A-association with phosphatidylinositol 3-monophosphate (PI3P)-containing membranes. Also regulates lipid droplets morphology and distribution within the cell. Functionally, (Microbial infection) Mediates the intracellular lifestyle of Cryptococcus neoformans by supporting infection. The polypeptide is Autophagy-related protein 2 homolog A (Mus musculus (Mouse)).